We begin with the raw amino-acid sequence, 868 residues long: MVASAAAMDASKYVRYTPEQVEALERLYYECPKPSSLRRQQLVRECPALANVDPKQIKVWFQNRRCREKQRKESSRLQALNRKLTAMNKLLMEENDRLQKQVSQLVYDHGRHGVAAAGMMRRVPAFPPQAAAAAGHQLATATDTSCESVVTSGHHHQQQQHNVVQPPPRDASPAGLMSIAEETLTEFLSKATGTAVEWLQMPGMKPGPDSIGIIAISHGCAGVAARACGLVGMEPAKVAEILKDRPLWLRDCRSMDVVNVLPAGANGTIELLYMQLYAPTTLAPARDFWLLRYTSILDDGSLVVCERSLSSKQGGPSMPLVQPFIRGEMLPSGFLIRPSDVGGSVIHIVDHMDLEPWSVPEVVRPLYESSAMVAQKISMAALRYLRQVAHEDTRSVITGWGRQPAALRALSQKLTRGFNEALNGLADDGWSVIESDGVDDVCISVNSSKVIGCNATFSSGLPIVSTGVLCAKASMLLQDVSPPSLLQFLREHRSQWADSNLDAFFASTMKPNFCNLPMSRLGGFSGQVILPLAHTFEPEEFLEVIKLGNASNYQDTLVHRDLFLLQMYNGVEESSAGTCSELIFAPIDASFSDDSPLLPSGFRIIPIDSPLDTSSPNCTLDLASTLEAATPRSRISGVNGGGGGCAAAAASSSSKAVMTIAFQFAFDGHLQDSVAAMARQYMRNIISSVQRIAVALSSSRLVPPGAGAAAAQLSPVTPEAATLPRWICQSYRFHFGDELIKSVDANSSNESILKAVWHHPSAILCCSLKAMPVFTFANQSGLDMLETTLVALQDMTLEKVFDDQGRKNLCTELPNIMEQGMACMEGGVCVSSVGRAASYEKAVAWKVVDGDGGGAHCICFMFINWTFL.

The segment at residues 9-72 (DASKYVRYTP…NRRCREKQRK (64 aa)) is a DNA-binding region (homeobox). Residues 64–106 (RRCREKQRKESSRLQALNRKLTAMNKLLMEENDRLQKQVSQLV) adopt a coiled-coil conformation. The disordered stretch occupies residues 150 to 171 (VTSGHHHQQQQHNVVQPPPRDA). An START domain is found at 169–397 (RDASPAGLMS…VAHEDTRSVI (229 aa)).

Belongs to the HD-ZIP homeobox family. Class III subfamily. Expressed in phloem.

The protein resides in the nucleus. In terms of biological role, probable transcription factor that may be necessary for the proper patterning of vascular bundles. This chain is Homeobox-leucine zipper protein HOX29 (HOX29), found in Oryza sativa subsp. japonica (Rice).